The primary structure comprises 238 residues: MRATTLLSSVVSLALLSKEVLATPPACLLACVAQVGKSSSTCDSLNQVTCYCEHENSAVKKCLDSICPNNDADAAYSAFKSSCSEQNASLGDSSSSASSSASSSSKASSSTKASSSSASSSTKASSSSASSSTKASSSSAAPSSSKASSTESSSSSSSSTKAPSSEESSSTYVSSSKQASSTSEAHSSSAASSTVSQETVSSALPTSTAVISTFSEGSGNVLEAGKSVFIAAVAAMLI.

Positions 1-22 are cleaved as a signal peptide; sequence MRATTLLSSVVSLALLSKEVLA. In terms of domain architecture, CFEM spans 23-110; it reads TPPACLLACV…ASSSSKASSS (88 aa). 4 disulfides stabilise this stretch: cysteine 27-cysteine 67, cysteine 31-cysteine 62, cysteine 42-cysteine 50, and cysteine 52-cysteine 83. A glycan (N-linked (GlcNAc...) asparagine) is linked at asparagine 87. A disordered region spans residues 91 to 203; sequence GDSSSSASSS…TVSQETVSSA (113 aa). Over residues 93 to 203 the composition is skewed to low complexity; the sequence is SSSSASSSAS…TVSQETVSSA (111 aa). Lysine 161 participates in a covalent cross-link: Glycyl lysine isopeptide (Lys-Gly) (interchain with G-Cter in ubiquitin). Glycine 217 is lipidated: GPI-anchor amidated glycine. Residues 218–238 constitute a propeptide, removed in mature form; it reads SGNVLEAGKSVFIAAVAAMLI.

It belongs to the CCW14 family. Post-translationally, extensively O-glycosylated. In terms of processing, the GPI-anchor is attached to the protein in the endoplasmic reticulum and serves to target the protein to the cell surface. There, the glucosamine-inositol phospholipid moiety is cleaved off and the GPI-modified mannoprotein is covalently attached via its lipidless GPI glycan remnant to the 1,6-beta-glucan of the outer cell wall layer.

The protein localises to the secreted. It is found in the cell wall. The protein resides in the membrane. Its function is as follows. Component of the inner layer of the cell wall. This chain is Covalently-linked cell wall protein 14 (CCW14), found in Saccharomyces cerevisiae (strain ATCC 204508 / S288c) (Baker's yeast).